The sequence spans 407 residues: Phosphopentomutase (407 aa).

Positions 10, 306, 311, 347, 348, and 359 each coordinate Mn(2+).

It belongs to the phosphopentomutase family. Mn(2+) serves as cofactor.

The protein localises to the cytoplasm. It carries out the reaction 2-deoxy-alpha-D-ribose 1-phosphate = 2-deoxy-D-ribose 5-phosphate. The catalysed reaction is alpha-D-ribose 1-phosphate = D-ribose 5-phosphate. Its pathway is carbohydrate degradation; 2-deoxy-D-ribose 1-phosphate degradation; D-glyceraldehyde 3-phosphate and acetaldehyde from 2-deoxy-alpha-D-ribose 1-phosphate: step 1/2. Its function is as follows. Isomerase that catalyzes the conversion of deoxy-ribose 1-phosphate (dRib-1-P) and ribose 1-phosphate (Rib-1-P) to deoxy-ribose 5-phosphate (dRib-5-P) and ribose 5-phosphate (Rib-5-P), respectively. The protein is Phosphopentomutase of Salmonella gallinarum (strain 287/91 / NCTC 13346).